Reading from the N-terminus, the 928-residue chain is Putative replication origin binding protein (928 aa).

In terms of domain architecture, Helicase ATP-binding spans Asn386–Ala516. Ala399–Thr406 is an ATP binding site. A DEAD box motif is present at residues Asp484 to Asp487.

This sequence belongs to the herpesviridae oribp family.

In terms of biological role, displays bipolar ssDNA and dsDNA unwinding activities that require the same core catalytic residues for unwinding in either direction, the 3'-5' direction being more robust. This Escherichia coli (Enterobacteria phage T5) protein is Putative replication origin binding protein.